The primary structure comprises 362 residues: Phosphatidylserine decarboxylase proenzyme (362 aa).

Residues 26-44 (YLLTGVTILSFIFMFQYKY) traverse the membrane as a helical segment. Active-site charge relay system; for autoendoproteolytic cleavage activity residues include aspartate 147, histidine 206, and serine 316. Serine 316 serves as the catalytic Schiff-base intermediate with substrate; via pyruvic acid; for decarboxylase activity. The residue at position 316 (serine 316) is a Pyruvic acid (Ser); by autocatalysis.

It belongs to the phosphatidylserine decarboxylase family. PSD-B subfamily. Eukaryotic type I sub-subfamily. In terms of assembly, heterodimer of a large membrane-associated beta subunit and a small pyruvoyl-containing alpha subunit. Requires pyruvate as cofactor. Is synthesized initially as an inactive proenzyme. Formation of the active enzyme involves a self-maturation process in which the active site pyruvoyl group is generated from an internal serine residue via an autocatalytic post-translational modification. Two non-identical subunits are generated from the proenzyme in this reaction, and the pyruvate is formed at the N-terminus of the alpha chain, which is derived from the carboxyl end of the proenzyme. The autoendoproteolytic cleavage occurs by a canonical serine protease mechanism, in which the side chain hydroxyl group of the serine supplies its oxygen atom to form the C-terminus of the beta chain, while the remainder of the serine residue undergoes an oxidative deamination to produce ammonia and the pyruvoyl prosthetic group on the alpha chain. During this reaction, the Ser that is part of the protease active site of the proenzyme becomes the pyruvoyl prosthetic group, which constitutes an essential element of the active site of the mature decarboxylase.

Its subcellular location is the endoplasmic reticulum membrane. It catalyses the reaction a 1,2-diacyl-sn-glycero-3-phospho-L-serine + H(+) = a 1,2-diacyl-sn-glycero-3-phosphoethanolamine + CO2. It participates in phospholipid metabolism; phosphatidylethanolamine biosynthesis; phosphatidylethanolamine from CDP-diacylglycerol: step 2/2. Its function is as follows. Catalyzes the formation of phosphatidylethanolamine (PtdEtn) from phosphatidylserine (PtdSer). Plays a central role in phospholipid metabolism and in the interorganelle trafficking of phosphatidylserine. In Plasmodium falciparum, this protein is Phosphatidylserine decarboxylase proenzyme.